Here is a 950-residue protein sequence, read N- to C-terminus: MLLLGISILALAWRPAGSSEPEWEVVVPIRRDPDINGRHYYRRGTEDSGDQGLIFQITAFQQDFYLHLTPDAQFLAPAFATEYLGVPLQRLTGSSLDLRRCFYSGYVNAEPDSFAAVSLCGGLRGAFGYRGAEYVISPLPNTSAPEAQRHSQGAHLLQRRGAPVGPSGDPTSRCGVASGWNPAILRALDPYKPRRTGAGESHNRRRSGRAKRFVSIPRYVETLVVADESMVKFHGADLEHYLLTLLATAARLYRHPSILNPINIVVVKVLLLGDRDTGPKVTGNAALTLRNFCAWQKKLNKVSDKHPEYWDTAILFTRQDLCGATTCDTLGMADVGTMCDPKRSCSVIEDDGLPSAFTTAHELGHVFNMPHDNVKVCEEVFGKLRANHMMSPTLIQIDRANPWSACSAAIITDFLDSGHGDCLLDQPSKPITLPEDLPGTSYSLSQQCELAFGVGSKPCPYMQYCTKLWCTGKAKGQMVCQTRHFPWADGTSCGEGKFCLKGACVERHNPNKYRVDGSWAKWEPYGSCSRTCGGGVQLARRQCSNPTPANGGKYCEGVRVKYRSCNLEPCPSSASGKSFREEQCEAFNGYNHSTNRLTLAVAWVPKYSGVSPRDKCKLICRANGTGYFYVLAPKVVDGTLCTPDSTSVCVQGKCIKAGCDGNLGSKKKFDKCGVCGGDNKSCKRVTGLFTKPMHGYNFVVAIPAGASSIDIRQRGYKGLIGDDNYLALKNSQGKYLLNGHFVVSAVERDLVVKGSVLRYSGTGTAVESLQASRPILEPLTVEVLSVGKMTPPRVRYSFYLPKEPREDKSTRPKDPRGSPVLRNSVLSLSNQVEQPDNRPPARWVAGSWGPCSVSCGSGLQKRAVDCRDSPGQQGASACDVDHRPLEKRACGEPCPTWELGNWSPCSKSCGRGFKRRPLKCVGHGGRLLARDQCDLRRKPQELDFCVLRPC.

An N-terminal signal peptide occupies residues 1–18 (MLLLGISILALAWRPAGS). Positions 19-212 (SEPEWEVVVP…NRRRSGRAKR (194 aa)) are excised as a propeptide. Asparagine 141 carries an N-linked (GlcNAc...) asparagine glycan. The tract at residues 144–172 (APEAQRHSQGAHLLQRRGAPVGPSGDPTS) is disordered. The Cysteine switch signature appears at 172–179 (SRCGVASG). Cysteine 174 contributes to the Zn(2+) binding site. Positions 218–427 (RYVETLVVAD…GHGDCLLDQP (210 aa)) constitute a Peptidase M12B domain. Cystine bridges form between cysteine 293/cysteine 345, cysteine 322/cysteine 327, cysteine 339/cysteine 422, cysteine 377/cysteine 406, cysteine 448/cysteine 470, cysteine 459/cysteine 480, cysteine 465/cysteine 499, cysteine 493/cysteine 504, cysteine 528/cysteine 565, cysteine 532/cysteine 570, and cysteine 543/cysteine 555. Histidine 361 serves as a coordination point for Zn(2+). Glutamate 362 is a catalytic residue. Zn(2+)-binding residues include histidine 365 and histidine 371. In terms of domain architecture, Disintegrin spans 428–515 (SKPITLPEDL…ERHNPNKYRV (88 aa)). Residues 516–571 (DGSWAKWEPYGSCSRTCGGGVQLARRQCSNPTPANGGKYCEGVRVKYRSCNLEPCP) enclose the TSP type-1 1 domain. 3 N-linked (GlcNAc...) asparagine glycosylation sites follow: asparagine 591, asparagine 623, and asparagine 679. Residues 701–838 (AIPAGASSID…SNQVEQPDNR (138 aa)) form a spacer region. The segment at 798 to 822 (FYLPKEPREDKSTRPKDPRGSPVLR) is disordered. Over residues 802 to 816 (KEPREDKSTRPKDPR) the composition is skewed to basic and acidic residues. TSP type-1 domains are found at residues 839–895 (PPAR…EPCP) and 896–949 (TWEL…VLRP).

Zn(2+) is required as a cofactor. In terms of processing, the precursor is cleaved by a furin endopeptidase. Post-translationally, glycosylated. Can be O-fucosylated by POFUT2 on a serine or a threonine residue found within the consensus sequence C1-X(2)-(S/T)-C2-G of the TSP type-1 repeat domains where C1 and C2 are the first and second cysteine residue of the repeat, respectively. Fucosylated repeats can then be further glycosylated by the addition of a beta-1,3-glucose residue by the glucosyltransferase, B3GALTL. Fucosylation mediates the efficient secretion of ADAMTS family members. Can be C-glycosylated with one or two mannose molecules on tryptophan residues within the consensus sequence W-X-X-W of the TPRs. Also N-glycosylated. These other glycosylations can also facilitate secretion. As to expression, in the adult colon, highly expressed in the muscularis externa (inner circular smooth muscle and outer longitudinal smooth muscle), muscularis mucosa, submucosal glands, crypt, villi epithelial cells, goblet cells and lamina propria. Expressed at perimuscular and peritendious areas in the developing limbs.

The protein localises to the secreted. It is found in the extracellular space. Its subcellular location is the extracellular matrix. The protein resides in the cell surface. Functionally, metalloprotease which has proteolytic activity against the proteoglycan VCAN, cleaving it at the 'Glu-1401-|-1402-Ala' site. Cleaves VCAN in the pericellular matrix surrounding myoblasts, facilitating myoblast contact and fusion which is required for skeletal muscle development and regeneration. The sequence is that of A disintegrin and metalloproteinase with thrombospondin motifs 15 (Adamts15) from Mus musculus (Mouse).